Consider the following 296-residue polypeptide: tRNA (guanine(9)-N1)-methyltransferase (296 aa).

The interval 1–33 is disordered; that stretch reads MTPETNNDETLSRPKPRAALPPVPEGMSKSQWK. The 190-residue stretch at 85–274 folds into the SAM-dependent MTase TRM10-type domain; sequence TPRVNVNQKD…SVLPARKLAE (190 aa). S-adenosyl-L-methionine contacts are provided by residues 181-182, G201, 205-209, C213, L227, and 239-241; these read LT, DKNRH, and KVL. D205 acts as the Proton acceptor in catalysis. Residues 277 to 296 are disordered; it reads DHAQESNSSSPAEEQDAQDI.

This sequence belongs to the class IV-like SAM-binding methyltransferase superfamily. TRM10 family. As to quaternary structure, monomer.

The protein localises to the cytoplasm. Its subcellular location is the nucleus. It catalyses the reaction guanosine(9) in tRNA + S-adenosyl-L-methionine = N(1)-methylguanosine(9) in tRNA + S-adenosyl-L-homocysteine + H(+). S-adenosyl-L-methionine-dependent guanine N(1)-methyltransferase that catalyzes the formation of N(1)-methylguanine at position 9 (m1G9) in cytoplasmic tRNA. The chain is tRNA (guanine(9)-N1)-methyltransferase from Eremothecium gossypii (strain ATCC 10895 / CBS 109.51 / FGSC 9923 / NRRL Y-1056) (Yeast).